Consider the following 133-residue polypeptide: Vascular endothelial growth factor homolog (133 aa).

Positions 1 to 20 (MKLLVGILVAVCLHQYLLNA) are cleaved as a signal peptide. Disulfide bonds link Cys-36-Cys-78, Cys-67-Cys-112, and Cys-71-Cys-114. Asn-85 carries N-linked (GlcNAc...) asparagine; by host glycosylation.

The protein belongs to the PDGF/VEGF growth factor family. Homodimer; disulfide-linked.

Its subcellular location is the secreted. Induces endothelial proliferation. The chain is Vascular endothelial growth factor homolog from Orf virus (strain NZ2) (OV NZ-2).